We begin with the raw amino-acid sequence, 564 residues long: Dihydroxy-acid dehydratase (564 aa).

Cys-55 is a binding site for [2Fe-2S] cluster. Asp-87 provides a ligand contact to Mg(2+). Cys-128 contacts [2Fe-2S] cluster. Mg(2+)-binding residues include Asp-129 and Lys-130. Residue Lys-130 is modified to N6-carboxylysine. Cys-200 contributes to the [2Fe-2S] cluster binding site. Mg(2+) is bound at residue Glu-452. The Proton acceptor role is filled by Ser-478.

Belongs to the IlvD/Edd family. In terms of assembly, homodimer. Requires [2Fe-2S] cluster as cofactor. Mg(2+) serves as cofactor.

It catalyses the reaction (2R)-2,3-dihydroxy-3-methylbutanoate = 3-methyl-2-oxobutanoate + H2O. The catalysed reaction is (2R,3R)-2,3-dihydroxy-3-methylpentanoate = (S)-3-methyl-2-oxopentanoate + H2O. Its pathway is amino-acid biosynthesis; L-isoleucine biosynthesis; L-isoleucine from 2-oxobutanoate: step 3/4. It functions in the pathway amino-acid biosynthesis; L-valine biosynthesis; L-valine from pyruvate: step 3/4. Functions in the biosynthesis of branched-chain amino acids. Catalyzes the dehydration of (2R,3R)-2,3-dihydroxy-3-methylpentanoate (2,3-dihydroxy-3-methylvalerate) into 2-oxo-3-methylpentanoate (2-oxo-3-methylvalerate) and of (2R)-2,3-dihydroxy-3-methylbutanoate (2,3-dihydroxyisovalerate) into 2-oxo-3-methylbutanoate (2-oxoisovalerate), the penultimate precursor to L-isoleucine and L-valine, respectively. The polypeptide is Dihydroxy-acid dehydratase (Albidiferax ferrireducens (strain ATCC BAA-621 / DSM 15236 / T118) (Rhodoferax ferrireducens)).